The chain runs to 565 residues: Dihydroxy-acid dehydratase (565 aa).

Residue Asp80 participates in Mg(2+) binding. Residue Cys121 coordinates [2Fe-2S] cluster. Mg(2+) contacts are provided by Asp122 and Lys123. Lys123 bears the N6-carboxylysine mark. Cys194 serves as a coordination point for [2Fe-2S] cluster. Glu447 contributes to the Mg(2+) binding site. Catalysis depends on Ser473, which acts as the Proton acceptor.

The protein belongs to the IlvD/Edd family. As to quaternary structure, homodimer. [2Fe-2S] cluster is required as a cofactor. It depends on Mg(2+) as a cofactor.

It catalyses the reaction (2R)-2,3-dihydroxy-3-methylbutanoate = 3-methyl-2-oxobutanoate + H2O. The catalysed reaction is (2R,3R)-2,3-dihydroxy-3-methylpentanoate = (S)-3-methyl-2-oxopentanoate + H2O. The protein operates within amino-acid biosynthesis; L-isoleucine biosynthesis; L-isoleucine from 2-oxobutanoate: step 3/4. Its pathway is amino-acid biosynthesis; L-valine biosynthesis; L-valine from pyruvate: step 3/4. Functionally, functions in the biosynthesis of branched-chain amino acids. Catalyzes the dehydration of (2R,3R)-2,3-dihydroxy-3-methylpentanoate (2,3-dihydroxy-3-methylvalerate) into 2-oxo-3-methylpentanoate (2-oxo-3-methylvalerate) and of (2R)-2,3-dihydroxy-3-methylbutanoate (2,3-dihydroxyisovalerate) into 2-oxo-3-methylbutanoate (2-oxoisovalerate), the penultimate precursor to L-isoleucine and L-valine, respectively. The protein is Dihydroxy-acid dehydratase of Chlorobium phaeovibrioides (strain DSM 265 / 1930) (Prosthecochloris vibrioformis (strain DSM 265)).